The primary structure comprises 374 residues: Alcohol dehydrogenase class-3 (374 aa).

Ala-2 is subject to N-acetylalanine. Zn(2+)-binding residues include Cys-45, His-67, Cys-97, Cys-100, Cys-103, Cys-111, and Cys-174. Residue Lys-233 is modified to N6-succinyllysine. Ser-247 bears the Phosphoserine mark. The residue at position 315 (Lys-315) is an N6-succinyllysine. Ser-324 carries the phosphoserine modification.

Belongs to the zinc-containing alcohol dehydrogenase family. Class-III subfamily. As to quaternary structure, homodimer. It depends on Zn(2+) as a cofactor.

It localises to the cytoplasm. It catalyses the reaction a primary alcohol + NAD(+) = an aldehyde + NADH + H(+). The enzyme catalyses a secondary alcohol + NAD(+) = a ketone + NADH + H(+). It carries out the reaction S-(hydroxymethyl)glutathione + NADP(+) = S-formylglutathione + NADPH + H(+). The catalysed reaction is S-(hydroxymethyl)glutathione + NAD(+) = S-formylglutathione + NADH + H(+). It catalyses the reaction 20-oxo-(5Z,8Z,11Z,14Z)-eicosatetraenoate + NAD(+) + H2O = (5Z,8Z,11Z,14Z)-eicosatetraenedioate + NADH + 2 H(+). The enzyme catalyses 20-hydroxy-(5Z,8Z,11Z,14Z)-eicosatetraenoate + NAD(+) = 20-oxo-(5Z,8Z,11Z,14Z)-eicosatetraenoate + NADH + H(+). It carries out the reaction S-nitrosoglutathione + NADH + H(+) = S-(hydroxysulfenamide)glutathione + NAD(+). Catalyzes the oxidation of long-chain primary alcohols and the oxidation of S-(hydroxymethyl) glutathione. Also oxidizes long chain omega-hydroxy fatty acids, such as 20-HETE, producing both the intermediate aldehyde, 20-oxoarachidonate and the end product, a dicarboxylic acid, (5Z,8Z,11Z,14Z)-eicosatetraenedioate. Class-III ADH is remarkably ineffective in oxidizing ethanol. Required for clearance of cellular formaldehyde, a cytotoxic and carcinogenic metabolite that induces DNA damage. Also acts as a S-nitroso-glutathione reductase by catalyzing the NADH-dependent reduction of S-nitrosoglutathione, thereby regulating protein S-nitrosylation. This is Alcohol dehydrogenase class-3 from Bos taurus (Bovine).